Consider the following 630-residue polypeptide: MNRLGGLSLPLRPVCLFCRAQTSLALSPLQGGQAVRSIATGRLRRRARMTLSKDVAKSSLKPKRTDRGKLGPFPNMNQTRARVREDPRSRSPAALKRSGETEEKPAMNTESPLYKALKMQTALAPISYGKRTAIKAKIAEITSFDAFTLLPIVRNSIFSQALPGIADAVPTPIQRVAIPRLLEDAPAKKQAKKVDDDEPQYEQYLLAAETGSGKTLAYLIPVIDAIKRQEIQEKEMEKKEEERKVREREENKKNQAFDLEPEIPPPSNAGRPRAIILVPTAELVAQVGAKLKAFAHTVKFRSGIISSNLTPRRIKSTLFNPAGIDILVSTPHLLASIAKTDPYVLSRVSHLVLDEADSLMDRSFLPISTEVISKAAPSLQKLIFCSATIPRSLDSQLRKLYPDIWRLTTPNLHAIPRRVQLGVVDIQKDPYRGNRNLACADVIWSIGKSGAGSDEAGSPWSEPKTKKILVFVNEREEADEVAQFLKSKGIDAHSFNRDSGTRKQEEILAEFTEPAAVPTAEEILLARKQQQRENINIPFVLPERTNRDTERRLDGVKVLVTTDIASRGIDTLALKTVILYHVPHTTIDFIHRLGRLGRMGKRGRAVVLVGKKDRKDVVKEVREVWFGLDS.

The transit peptide at 1–46 (MNRLGGLSLPLRPVCLFCRAQTSLALSPLQGGQAVRSIATGRLRRR) directs the protein to the mitochondrion. The interval 46–108 (RARMTLSKDV…GETEEKPAMN (63 aa)) is disordered. Residues 167 to 174 (DAVPTPIQ) carry the Q motif motif. Positions 195-407 (DDDEPQYEQY…RKLYPDIWRL (213 aa)) constitute a Helicase ATP-binding domain. Residue 208 to 215 (AETGSGKT) coordinates ATP. A compositionally biased stretch (basic and acidic residues) spans 235-255 (EMEKKEEERKVREREENKKNQ). A disordered region spans residues 235-265 (EMEKKEEERKVREREENKKNQAFDLEPEIPP). Residues 354-357 (DEAD) carry the DEAD box motif. One can recognise a Helicase C-terminal domain in the interval 452–630 (GSDEAGSPWS…VREVWFGLDS (179 aa)).

This sequence belongs to the DEAD box helicase family. MRH4 subfamily.

The protein localises to the mitochondrion. It catalyses the reaction ATP + H2O = ADP + phosphate + H(+). In terms of biological role, ATP-binding RNA helicase involved in mitochondrial RNA metabolism. Required for maintenance of mitochondrial DNA. This Emericella nidulans (strain FGSC A4 / ATCC 38163 / CBS 112.46 / NRRL 194 / M139) (Aspergillus nidulans) protein is ATP-dependent RNA helicase mrh4, mitochondrial (mrh4).